Consider the following 336-residue polypeptide: Torsin-1B (336 aa).

Positions 1 to 24 are cleaved as a signal peptide; that stretch reads MLRAGWLRGAAALALLLAARVVAA. A glycan (N-linked (GlcNAc...) asparagine) is linked at Asn-64. Residue 109–116 coordinates ATP; that stretch reads GWAGTGKN. Residue Asn-165 is glycosylated (N-linked (GlcNAc...) asparagine).

This sequence belongs to the ClpA/ClpB family. Torsin subfamily. Homohexamer. Interacts with TOR1A; the interaction may be specific of neural tissues. Interacts with TOR1AIP1; TOR1AIP1 is required for TOR1B location on the nuclear membrane. Interacts (ATP-bound) with TOR1AIP2; important for endoplasmic reticulum integrity. Post-translationally, N-glycosylated. In terms of tissue distribution, widely expressed with low levels in brain.

It is found in the endoplasmic reticulum lumen. Its subcellular location is the nucleus membrane. The catalysed reaction is ATP + H2O = ADP + phosphate + H(+). Its function is as follows. May serve as a molecular chaperone assisting in the proper folding of secreted and/or membrane proteins. Plays a role in non-neural cells nuclear envelope and endoplasmic reticulum integrity. May have a redundant function with TOR1A in non-neural tissues. This is Torsin-1B (TOR1B) from Homo sapiens (Human).